Consider the following 113-residue polypeptide: Ribonuclease P protein component (113 aa).

Belongs to the RnpA family. As to quaternary structure, consists of a catalytic RNA component (M1 or rnpB) and a protein subunit.

It catalyses the reaction Endonucleolytic cleavage of RNA, removing 5'-extranucleotides from tRNA precursor.. In terms of biological role, RNaseP catalyzes the removal of the 5'-leader sequence from pre-tRNA to produce the mature 5'-terminus. It can also cleave other RNA substrates such as 4.5S RNA. The protein component plays an auxiliary but essential role in vivo by binding to the 5'-leader sequence and broadening the substrate specificity of the ribozyme. This chain is Ribonuclease P protein component, found in Clavibacter michiganensis subsp. michiganensis (strain NCPPB 382).